Reading from the N-terminus, the 351-residue chain is NAD-dependent protein deacetylase SIR2rp1 (351 aa).

The region spanning 10–325 is the Deacetylase sirtuin-type domain; the sequence is HVVGEPTFEG…RSFAQALGFG (316 aa). NAD(+) is bound by residues 37–57 and 122–125; these read GAGISVAAGIPDFRSPHTGLY and QNID. Catalysis depends on histidine 142, which acts as the Proton acceptor. Residues cysteine 150, cysteine 153, cysteine 174, and cysteine 177 each coordinate Zn(2+). NAD(+) contacts are provided by residues 213–215 and 238–240; these read GTS and NLE. The disordered stretch occupies residues 260-284; that stretch reads SSYRLSTGNGNGSKISSGDSSNSSS. A compositionally biased stretch (low complexity) spans 265-284; the sequence is STGNGNGSKISSGDSSNSSS. Cysteine 311 provides a ligand contact to NAD(+).

This sequence belongs to the sirtuin family. Class I subfamily. Zn(2+) is required as a cofactor.

It localises to the nucleus. The protein localises to the chromosome. Its subcellular location is the telomere. It catalyses the reaction N(6)-acetyl-L-lysyl-[protein] + NAD(+) + H2O = 2''-O-acetyl-ADP-D-ribose + nicotinamide + L-lysyl-[protein]. NAD-dependent protein deacetylase, which is involved in repression of RNA polymerase I-mediated expression immediately adjacent to telomeres. It is however not involved in antigenic variation and subtelomeric variant surface glycoprotein (VSG) gene silencing. Plays a role in DNA damage response. Also has ADP-ribosylation activity in vitro. In Trypanosoma brucei brucei (strain 927/4 GUTat10.1), this protein is NAD-dependent protein deacetylase SIR2rp1 (SIR2rp1).